We begin with the raw amino-acid sequence, 133 residues long: Cell division protein FtsL (133 aa).

Residues 1 to 45 (MAVEKVYQPYDEQVYNSIPKQQPQTKPEKKTVSRKVVVQLTKFEK) are Cytoplasmic-facing. The chain crosses the membrane as a helical span at residues 46 to 65 (VLYITLITVIAMLSIYMLSL). Over 66-133 (KMDAYDTRGK…VVRSNGEAKN (68 aa)) the chain is Extracellular.

This sequence belongs to the FtsL family.

The protein resides in the cell membrane. In terms of biological role, essential cell division protein. The polypeptide is Cell division protein FtsL (Staphylococcus aureus (strain NCTC 8325 / PS 47)).